The following is a 182-amino-acid chain: Lipoprotein signal peptidase (182 aa).

4 consecutive transmembrane segments (helical) span residues 15–35, 44–64, 65–85, and 97–117; these read LYIG…FLVI, LEVL…FVFG, AFQD…VFLI, and PWGW…KFFV. Residues Asp-140 and Asp-162 contribute to the active site. The helical transmembrane segment at 155–175 threads the bilayer; it reads WPAFNVADSCVTIGLTILIFT.

This sequence belongs to the peptidase A8 family.

It is found in the cell inner membrane. The catalysed reaction is Release of signal peptides from bacterial membrane prolipoproteins. Hydrolyzes -Xaa-Yaa-Zaa-|-(S,diacylglyceryl)Cys-, in which Xaa is hydrophobic (preferably Leu), and Yaa (Ala or Ser) and Zaa (Gly or Ala) have small, neutral side chains.. It participates in protein modification; lipoprotein biosynthesis (signal peptide cleavage). Functionally, this protein specifically catalyzes the removal of signal peptides from prolipoproteins. The polypeptide is Lipoprotein signal peptidase (Leptospira borgpetersenii serovar Hardjo-bovis (strain L550)).